Here is a 294-residue protein sequence, read N- to C-terminus: Homeobox-leucine zipper protein ATHB-16 (294 aa).

The segment covering 1-20 (MKRLSSSDSMCGLISTSTDE) has biased composition (polar residues). The interval 1 to 31 (MKRLSSSDSMCGLISTSTDEQSPRGYGSNYQ) is disordered. The homeobox DNA-binding region spans 56-115 (LSEKKRRLKVDQVKALEKNFELENKLEPERKTKLAQELGLQPRQVAVWFQNRRARWKTKQ). The segment at 116-151 (LEKDYGVLKGQYDSLRHNFDSLRRDNDSLLQEISKI) is leucine-zipper. The span at 219 to 238 (SSDSCDSSAVLNDETSSDNG) shows a compositional bias: polar residues. The disordered stretch occupies residues 219–241 (SSDSCDSSAVLNDETSSDNGRLT).

It belongs to the HD-ZIP homeobox family. Class I subfamily. In terms of tissue distribution, widely expressed with a lower level in siliques.

It localises to the nucleus. In terms of biological role, probable transcription factor that may function as a negative regulator of the flowering time response to photoperiod. May act to repress cell expansion during plant development. The chain is Homeobox-leucine zipper protein ATHB-16 (ATHB-16) from Arabidopsis thaliana (Mouse-ear cress).